Here is a 408-residue protein sequence, read N- to C-terminus: MAPPLPILIIGAGISGLTTARLLTNSGIPNIVFEASSPDRRQGFAISLREWGYATLLSALGDLPLRSLTRGVAPDREIGGSGWIDQAVWDNGTAKKLFVPDANSSTKEQIVRANRNALRRWIADCGEEELDVRYGHRLKRVEGSLGDVQVEFENGAFYRGLMVVAADGVNSTVRSQVLADVQPEIVPAVLYHGEFQLPRADFDRLFRPHTGESNILAGVGDGFNTPFAVCNMTKTHVHMDWSYSRPAWGSGENDPLYRPNLASEEAKRIPPALVEELASRDLAEPWSLFLNGEAIQHHRVFHWAVRCVSVTQEDMQRAVGRGIAFVGDSWHAMPIFGGEGGNHALADGVELAAAVAAGVAGDLGVAIGNYYDRAWKRSQDAVRRSKQRFYALHRPMAQWRELSQKKPV.

A signal peptide spans 1 to 20; that stretch reads MAPPLPILIIGAGISGLTTA. Residues E34 and A45 each coordinate FAD. N-linked (GlcNAc...) asparagine glycans are attached at residues N91 and N103. Residue R119 coordinates FAD. N-linked (GlcNAc...) asparagine glycosylation is found at N170 and N231. FAD contacts are provided by D328 and G341.

It belongs to the paxM FAD-dependent monooxygenase family. FAD serves as cofactor.

Its pathway is secondary metabolite biosynthesis. Its function is as follows. FAD-dependent monooxygenase; part of the gene cluster that mediates the biosynthesis of neosartoricin, a prenylated anthracenone that exhibits T-cell antiproliferative activity, suggestive of a physiological role as an immunosuppressive agent. The non-reducing polyketide synthase nscA probably synthesizes and cyclizes the decaketide backbone. The hydrolase nscB then mediates the product release through hydrolysis followed by spontaneous decarboxylation. The prenyltransferase nscD catalyzes the addition of the dimethylallyl group to the aromatic C5. The FAD-dependent monooxygenase nscC is then responsible for the stereospecific hydroxylation at C2. There is no gene encoding O-acetyltransferase in the nsc gene cluster; thus, the last step of 2-O-acetylation leading to neosartoricin may be catalyzed by an unidentified O-acetyltransferase. This is FAD-dependent monooxygenase nscC from Neosartorya fischeri (strain ATCC 1020 / DSM 3700 / CBS 544.65 / FGSC A1164 / JCM 1740 / NRRL 181 / WB 181) (Aspergillus fischerianus).